Reading from the N-terminus, the 231-residue chain is ATP phosphoribosyltransferase (231 aa).

The protein belongs to the ATP phosphoribosyltransferase family. Short subfamily. As to quaternary structure, heteromultimer composed of HisG and HisZ subunits.

Its subcellular location is the cytoplasm. It carries out the reaction 1-(5-phospho-beta-D-ribosyl)-ATP + diphosphate = 5-phospho-alpha-D-ribose 1-diphosphate + ATP. Its pathway is amino-acid biosynthesis; L-histidine biosynthesis; L-histidine from 5-phospho-alpha-D-ribose 1-diphosphate: step 1/9. Its function is as follows. Catalyzes the condensation of ATP and 5-phosphoribose 1-diphosphate to form N'-(5'-phosphoribosyl)-ATP (PR-ATP). Has a crucial role in the pathway because the rate of histidine biosynthesis seems to be controlled primarily by regulation of HisG enzymatic activity. This is ATP phosphoribosyltransferase (hisG) from Rhizobium etli (strain ATCC 51251 / DSM 11541 / JCM 21823 / NBRC 15573 / CFN 42).